We begin with the raw amino-acid sequence, 360 residues long: Alanine racemase (360 aa).

The active-site Proton acceptor; specific for D-alanine is the Lys33. An N6-(pyridoxal phosphate)lysine modification is found at Lys33. Arg129 serves as a coordination point for substrate. The active-site Proton acceptor; specific for L-alanine is Tyr253. Met301 is a substrate binding site.

The protein belongs to the alanine racemase family. Requires pyridoxal 5'-phosphate as cofactor.

The catalysed reaction is L-alanine = D-alanine. It participates in amino-acid biosynthesis; D-alanine biosynthesis; D-alanine from L-alanine: step 1/1. Catalyzes the interconversion of L-alanine and D-alanine. May also act on other amino acids. This chain is Alanine racemase (alr), found in Xanthomonas campestris pv. campestris (strain 8004).